Here is a 745-residue protein sequence, read N- to C-terminus: Cellulose synthase 1 catalytic subunit [UDP-forming] (745 aa).

Transmembrane regions (helical) follow at residues tyrosine 29–leucine 49, glycine 106–serine 126, and isoleucine 153–leucine 173. Residues glutamate 147–isoleucine 240 are catalytic subdomain A. Aspartate 189 is a catalytic residue. Substrate-binding residues include aspartate 236 and aspartate 238. A catalytic subdomain B region spans residues lysine 317–methionine 377. Aspartate 333 is an active-site residue. Helical transmembrane passes span phenylalanine 407–serine 427, isoleucine 430–isoleucine 450, valine 468–proline 488, asparagine 515–phenylalanine 535, alanine 547–glycine 567, and alanine 649–phenylalanine 669. Residues glutamine 572–glycine 670 form the PilZ domain. Over residues isoleucine 708–proline 717 the composition is skewed to basic residues. The disordered stretch occupies residues isoleucine 708–serine 745. Residues glutamine 736–serine 745 are compositionally biased toward basic and acidic residues.

The protein belongs to the glycosyltransferase 2 family. Mg(2+) serves as cofactor.

The protein localises to the cell inner membrane. The enzyme catalyses [(1-&gt;4)-beta-D-glucosyl](n) + UDP-alpha-D-glucose = [(1-&gt;4)-beta-D-glucosyl](n+1) + UDP + H(+). Its pathway is glycan metabolism; bacterial cellulose biosynthesis. With respect to regulation, activated by bis-(3'-5') cyclic diguanylic acid (c-di-GMP). In terms of biological role, catalytic subunit of cellulose synthase. It polymerizes uridine 5'-diphosphate glucose to cellulose. The thick cellulosic mats generated by this enzyme probably provide a specialized protective environment to the bacterium. This is Cellulose synthase 1 catalytic subunit [UDP-forming] (bcsAI) from Komagataeibacter xylinus (Gluconacetobacter xylinus).